Here is a 225-residue protein sequence, read N- to C-terminus: 2-C-methyl-D-erythritol 4-phosphate cytidylyltransferase (225 aa).

This sequence belongs to the IspD/TarI cytidylyltransferase family. IspD subfamily.

It catalyses the reaction 2-C-methyl-D-erythritol 4-phosphate + CTP + H(+) = 4-CDP-2-C-methyl-D-erythritol + diphosphate. The protein operates within isoprenoid biosynthesis; isopentenyl diphosphate biosynthesis via DXP pathway; isopentenyl diphosphate from 1-deoxy-D-xylulose 5-phosphate: step 2/6. Functionally, catalyzes the formation of 4-diphosphocytidyl-2-C-methyl-D-erythritol from CTP and 2-C-methyl-D-erythritol 4-phosphate (MEP). In Clostridium perfringens (strain ATCC 13124 / DSM 756 / JCM 1290 / NCIMB 6125 / NCTC 8237 / Type A), this protein is 2-C-methyl-D-erythritol 4-phosphate cytidylyltransferase.